Consider the following 221-residue polypeptide: Phosphoglycolate phosphatase (221 aa).

The active-site Nucleophile is the D7. Mg(2+)-binding residues include D7 and D9. K148 is a binding site for substrate. Residues D171 and D175 each contribute to the Mg(2+) site.

The protein belongs to the archaeal SPP-like hydrolase family. It depends on Mg(2+) as a cofactor.

It catalyses the reaction 2-phosphoglycolate + H2O = glycolate + phosphate. Its function is as follows. Catalyzes the dephosphorylation of 2-phosphoglycolate. The chain is Phosphoglycolate phosphatase from Methanothermobacter thermautotrophicus (strain ATCC 29096 / DSM 1053 / JCM 10044 / NBRC 100330 / Delta H) (Methanobacterium thermoautotrophicum).